We begin with the raw amino-acid sequence, 157 residues long: SsrA-binding protein (157 aa).

Belongs to the SmpB family.

Its subcellular location is the cytoplasm. Functionally, required for rescue of stalled ribosomes mediated by trans-translation. Binds to transfer-messenger RNA (tmRNA), required for stable association of tmRNA with ribosomes. tmRNA and SmpB together mimic tRNA shape, replacing the anticodon stem-loop with SmpB. tmRNA is encoded by the ssrA gene; the 2 termini fold to resemble tRNA(Ala) and it encodes a 'tag peptide', a short internal open reading frame. During trans-translation Ala-aminoacylated tmRNA acts like a tRNA, entering the A-site of stalled ribosomes, displacing the stalled mRNA. The ribosome then switches to translate the ORF on the tmRNA; the nascent peptide is terminated with the 'tag peptide' encoded by the tmRNA and targeted for degradation. The ribosome is freed to recommence translation, which seems to be the essential function of trans-translation. The sequence is that of SsrA-binding protein from Rhodococcus jostii (strain RHA1).